Here is a 324-residue protein sequence, read N- to C-terminus: mRNA decay activator protein ZFP36 (324 aa).

The tract at residues 1-15 (MDLAAIYKSLLSLSP) is necessary for nuclear export. The tract at residues 1-98 (MDLAAIYKSL…PTSPTATPTT (98 aa)) is necessary and sufficient for the association with mRNA decay enzymes and mRNA decay activation. 2 necessary for localization of ARE-containing mRNAs to processing bodies (PBs) regions span residues 1–172 (MDLA…DLAA) and 98–324 (TSSR…SVSE). Residues 15–46 (PELPSDLGETESSTSWASSGPWSLSSSDSSLP) show a composition bias toward low complexity. Positions 15–50 (PELPSDLGETESSTSWASSGPWSLSSSDSSLPEVAA) are disordered. Phosphoserine; by MAPKAPK2 is present on Ser-58. Ser-64 is subject to Phosphoserine. A P-P-P-P-G repeat occupies 69 to 73 (PPPPG). Positions 76-100 (PLAPRPSSDWSPSPTSPTATPTTSS) are disordered. A phosphoserine mark is found at Ser-86 and Ser-88. Thr-90 bears the Phosphothreonine mark. Ser-91 is modified (phosphoserine). The tract at residues 93–166 (TATPTTSSRY…GSRCHFIHNP (74 aa)) is necessary for nuclear localization. The necessary for RNA-binding stretch occupies residues 95 to 171 (TPTTSSRYKT…FIHNPSEDLA (77 aa)). 2 C3H1-type zinc fingers span residues 101–129 (RYKT…HGLG) and 139–167 (KYKT…HNPS). The interval 101–192 (RYKTELCRTF…ISFSGLPSGR (92 aa)) is necessary for interaction with PABPN1. Position 167 is a phosphoserine (Ser-167). A necessary for mRNA decay activation region spans residues 172–324 (APGHPHVLRQ…PIFNRISVSE (153 aa)). At Ser-184 the chain carries Phosphoserine; by MAPKAPK2. Disordered regions lie at residues 185–227 (FSGL…LLLS) and 270–324 (PSAH…SVSE). Ser-195 carries the phosphoserine modification. Residues 196–200 (PPPAS) form a P-P-P-P-G repeat. A compositionally biased stretch (low complexity) spans 204–214 (PSVSSWSFSPS). Phosphoserine is present on Ser-216. The stretch at 218–222 (PPPPG) is one P-P-P-P-G repeat. Ser-227 is modified (phosphoserine; by MAPK1; in vitro). Phosphoserine occurs at positions 274, 294, and 321. Residues 310-324 (APRRLPIFNRISVSE) are interaction with CNOT1.

In terms of assembly, associates with cytoplasmic CCR4-NOT and PAN2-PAN3 deadenylase complexes to trigger ARE-containing mRNA deadenylation and decay processes. Part of a mRNA decay activation complex at least composed of poly(A)-specific exoribonucleases CNOT6, EXOSC2 and XRN1 and mRNA-decapping enzymes DCP1A and DCP2. Associates with the RNA exosome complex. Interacts (via phosphorylated form) with 14-3-3 proteins; these interactions promote exclusion of ZFP36 from cytoplasmic stress granules in response to arsenite treatment in a MAPKAPK2-dependent manner and does not prevent CCR4-NOT deadenylase complex recruitment or ZFP36-induced ARE-containing mRNA deadenylation and decay processes. Interacts with 14-3-3 proteins; these interactions occur in response to rapamycin in an Akt-dependent manner. Interacts with AGO2 and AGO4. Interacts (via C-terminus) with CNOT1; this interaction occurs in a RNA-independent manner and induces mRNA deadenylation. Interacts (via N-terminus) with CNOT6. Interacts with CNOT6L. Interacts (via C-terminus) with CNOT7; this interaction occurs in a RNA-independent manner, induces mRNA deadenylation and is inhibited in a phosphorylation MAPKAPK2-dependent manner. Interacts (via unphosphorylated form) with CNOT8; this interaction occurs in a RNA-independent manner and is inhibited in a phosphorylation MAPKAPK2-dependent manner. Interacts with DCP1A. Interacts (via N-terminus) with DCP2. Interacts with EDC3. Interacts (via N-terminus) with EXOSC2. Interacts with heat shock 70 kDa proteins. Interacts with KHSRP; this interaction increases upon cytokine-induced treatment. Interacts with MAP3K4; this interaction enhances the association with SH3KBP1/CIN85. Interacts with MAPKAPK2; this interaction occurs upon skeletal muscle satellite cell activation. Interacts with NCL. Interacts with NUP214; this interaction increases upon lipopolysaccharide (LPS) stimulation. Interacts with PABPC1; this interaction occurs in a RNA-dependent manner. Interacts (via hypophosphorylated form) with PABPN1 (via RRM domain and C-terminal arginine-rich region); this interaction occurs in the nucleus in a RNA-independent manner, decreases in presence of single-stranded poly(A) RNA-oligomer and in a p38 MAPK-dependent-manner and inhibits nuclear poly(A) tail synthesis. Interacts with PAN2. Interacts (via C3H1-type zinc finger domains) with PKM. Interacts (via C3H1-type zinc finger domains) with nuclear RNA poly(A) polymerase. Interacts with PPP2CA; this interaction occurs in LPS-stimulated cells and induces ZFP36 dephosphorylation, and hence may promote ARE-containing mRNAs decay. Interacts (via C-terminus) with PRR5L (via C-terminus); this interaction may accelerate ZFP36-mediated mRNA decay during stress. Interacts (via C-terminus) with SFN; this interaction occurs in a phosphorylation-dependent manner. Interacts (via extreme C-terminal region) with SH3KBP1/CIN85 (via SH3 domains); this interaction enhances MAP3K4-induced phosphorylation of ZFP36 at Ser-64 and Ser-91 and does not alter neither ZFP36 binding to ARE-containing transcripts nor TNF-alpha mRNA decay. Interacts with XRN1. Interacts (via C-terminus and Ser-184 phosphorylated form) with YWHAB; this interaction occurs in a p38/MAPKAPK2-dependent manner, increases cytoplasmic localization of ZFP36 and protects ZFP36 from Ser-184 dephosphorylation by serine/threonine phosphatase 2A, and hence may be crucial for stabilizing ARE-containing mRNAs. Interacts (via phosphorylated form) with YWHAE. Interacts (via C-terminus) with YWHAG; this interaction occurs in a phosphorylation-dependent manner. Interacts with YWHAH; this interaction occurs in a phosphorylation-dependent manner. Interacts with YWHAQ; this interaction occurs in a phosphorylation-dependent manner. Interacts with (via C-terminus) YWHAZ; this interaction occurs in a phosphorylation-dependent manner. Does not interact with SH3KBP1. Interacts (via P-P-P-P-G repeats) with GIGYF2; the interaction is direct. Phosphorylated. Phosphorylation at serine and/or threonine residues occurs in a p38 MAPK- and MAPKAPK2-dependent manner. Phosphorylated by MAPKAPK2 at Ser-58 and Ser-184; phosphorylation increases its stability and cytoplasmic localization, promotes binding to 14-3-3 adapter proteins and inhibits the recruitment of cytoplasmic CCR4-NOT and PAN2-PAN3 deadenylase complexes to the mRNA decay machinery, thereby inhibiting ZFP36-induced ARE-containing mRNA deadenylation and decay processes. Phosphorylation by MAPKAPK2 does not impair ARE-containing RNA-binding. Phosphorylated in a MAPKAPK2- and p38 MAPK-dependent manner upon skeletal muscle satellite cell activation; this phosphorylation inhibits ZFP36-mediated mRNA decay activity, and hence stabilizes MYOD1 mRNA. Phosphorylated by MAPK1 upon mitogen stimulation. Phosphorylated at Ser-64 and Ser-91; these phosphorylations increase in a SH3KBP1-dependent manner. Phosphorylated at serine and threonine residues in a pyruvate kinase PKM- and p38 MAPK-dependent manner. Phosphorylation at Ser-58 may participate in the PKM-mediated degradation of ZFP36 in a p38 MAPK-dependent manner. Dephosphorylated by serine/threonine phosphatase 2A at Ser-184. Post-translationally, ubiquitinated; pyruvate kinase (PKM)-dependent ubiquitination leads to proteasomal degradation through a p38 MAPK signaling pathway.

The protein localises to the nucleus. The protein resides in the cytoplasm. Its subcellular location is the cytoplasmic granule. It is found in the P-body. Zinc-finger RNA-binding protein that destabilizes numerous cytoplasmic AU-rich element (ARE)-containing mRNA transcripts by promoting their poly(A) tail removal or deadenylation, and hence provide a mechanism for attenuating protein synthesis. Acts as an 3'-untranslated region (UTR) ARE mRNA-binding adapter protein to communicate signaling events to the mRNA decay machinery. Recruits deadenylase CNOT7 (and probably the CCR4-NOT complex) via association with CNOT1, and hence promotes ARE-mediated mRNA deadenylation. Also functions by recruiting components of the cytoplasmic RNA decay machinery to the bound ARE-containing mRNAs. Self regulates by destabilizing its own mRNA. Binds to 3'-UTR ARE of numerous mRNAs. Also binds to ARE of its own mRNA. Plays a role in anti-inflammatory responses; suppresses tumor necrosis factor (TNF)-alpha production by stimulating ARE-mediated TNF-alpha mRNA decay and several other inflammatory ARE-containing mRNAs in interferon (IFN)- and/or lipopolysaccharide (LPS)-induced macrophages. Also plays a role in the regulation of dendritic cell maturation at the post-transcriptional level, and hence operates as part of a negative feedback loop to limit the inflammatory response. Promotes ARE-mediated mRNA decay of hypoxia-inducible factor HIF1A mRNA during the response of endothelial cells to hypoxia. Positively regulates early adipogenesis of preadipocytes by promoting ARE-mediated mRNA decay of immediate early genes (IEGs). Negatively regulates hematopoietic/erythroid cell differentiation by promoting ARE-mediated mRNA decay of the transcription factor STAT5B mRNA. Plays a role in maintaining skeletal muscle satellite cell quiescence by promoting ARE-mediated mRNA decay of the myogenic determination factor MYOD1 mRNA. Also associates with and regulates the expression of non-ARE-containing target mRNAs at the post-transcriptional level, such as MHC class I mRNAs. Participates in association with argonaute RISC catalytic components in the ARE-mediated mRNA decay mechanism; assists microRNA (miRNA) targeting ARE-containing mRNAs. May also play a role in the regulation of cytoplasmic mRNA decapping; enhances decapping of ARE-containing RNAs, in vitro. Involved in the delivery of target ARE-mRNAs to processing bodies (PBs). In addition to its cytosolic mRNA-decay function, affects nuclear pre-mRNA processing. Negatively regulates nuclear poly(A)-binding protein PABPN1-stimulated polyadenylation activity on ARE-containing pre-mRNA during LPS-stimulated macrophages. Also involved in the regulation of stress granule (SG) and P-body (PB) formation and fusion. Plays a role in the regulation of keratinocyte proliferation, differentiation and apoptosis. Plays a role as a tumor suppressor by inhibiting cell proliferation in breast cancer cells. The protein is mRNA decay activator protein ZFP36 of Bos taurus (Bovine).